The primary structure comprises 342 residues: SWR1-complex protein 5 (342 aa).

Disordered stretches follow at residues 1-126 (MAPT…PVTI), 142-178 (PRTS…DPDS), and 214-238 (LGEN…RMPR). 2 stretches are compositionally biased toward acidic residues: residues 8 to 20 (LAED…DSDF) and 33 to 43 (ISDDDDEEAGE). Residues 78-87 (GEKRQKKTKT) show a composition bias toward basic residues. The BCNT-C domain occupies 260 to 341 (NLSMASRLQA…RRARMAQAGK (82 aa)).

The protein belongs to the SWC5 family. As to quaternary structure, component of the SWR1 chromatin remodeling complex.

It localises to the nucleus. In terms of biological role, component of the SWR1 complex which mediates the ATP-dependent exchange of histone H2A for the H2A variant H2A.Z leading to transcriptional regulation of selected genes by chromatin remodeling. Involved in chromosome stability. The chain is SWR1-complex protein 5 (crc-2) from Neurospora crassa (strain ATCC 24698 / 74-OR23-1A / CBS 708.71 / DSM 1257 / FGSC 987).